A 217-amino-acid polypeptide reads, in one-letter code: Cytochrome b5 domain-containing protein 1 (217 aa).

Residues 6 to 72 (PRYFTPREVS…NPKTGDVKTH (67 aa)) enclose the Cytochrome b5 heme-binding domain. His-41 and His-72 together coordinate heme.

This sequence belongs to the cytochrome b5 family.

Its subcellular location is the cytoplasm. The protein resides in the cytoskeleton. It is found in the cilium axoneme. Radial spoke stalk protein that binds heme under oxidizing conditions. Required for the coordinated beating of multiple cilia maybe by functioning in a redox signaling pathway. The sequence is that of Cytochrome b5 domain-containing protein 1 (cyb5d1) from Xenopus laevis (African clawed frog).